The primary structure comprises 34 residues: Photosystem I reaction center subunit XII (34 aa).

A helical transmembrane segment spans residues 11–31 (VAIAFVVALIAGIAALLLSTA).

The protein belongs to the PsaM family. As to quaternary structure, the G.violaceus PSI reaction center is composed of one copy each of PsaA,B,C,D,E,F,L,M and Z, and forms trimeric complexes.

The protein localises to the cell inner membrane. The chain is Photosystem I reaction center subunit XII from Gloeobacter violaceus (strain ATCC 29082 / PCC 7421).